Consider the following 237-residue polypeptide: Phosphoribosylaminoimidazole-succinocarboxamide synthase (237 aa).

It belongs to the SAICAR synthetase family.

The enzyme catalyses 5-amino-1-(5-phospho-D-ribosyl)imidazole-4-carboxylate + L-aspartate + ATP = (2S)-2-[5-amino-1-(5-phospho-beta-D-ribosyl)imidazole-4-carboxamido]succinate + ADP + phosphate + 2 H(+). It functions in the pathway purine metabolism; IMP biosynthesis via de novo pathway; 5-amino-1-(5-phospho-D-ribosyl)imidazole-4-carboxamide from 5-amino-1-(5-phospho-D-ribosyl)imidazole-4-carboxylate: step 1/2. The sequence is that of Phosphoribosylaminoimidazole-succinocarboxamide synthase from Klebsiella pneumoniae (strain 342).